The following is a 290-amino-acid chain: uncharacterized protein (290 aa).

Positions 67–210 are disordered; it reads LPAAPEAPGD…QPSPKNPTKS (144 aa). Basic and acidic residues predominate over residues 121–130; it reads RPQETQEGHR. Residues 181–190 show a composition bias toward low complexity; it reads AAQAAAAATA. The segment covering 191–200 has biased composition (polar residues); sequence NPGSQTQTPL.

This is an uncharacterized protein from Homo sapiens (Human).